A 741-amino-acid polypeptide reads, in one-letter code: Polyribonucleotide nucleotidyltransferase (741 aa).

Residues aspartate 489 and aspartate 495 each contribute to the Mg(2+) site. One can recognise a KH domain in the interval 556–615 (PKIDSIQIPVDKIKVVIGKGGETIDKIIAETGVTIDIDEEGLVQIFSSDQDAIDRAKTII). Positions 625 to 693 (GEVYTVPVVR…EKGRVDASIK (69 aa)) constitute an S1 motif domain. Residues 696–741 (LPKPEKNEDGENGEEHRHCCCSHHKPDHHSESMEAPKKSDESETKE) form a disordered region. Basic and acidic residues-rich tracts occupy residues 698–713 (KPEK…EHRH) and 723–741 (HHSE…ETKE).

It belongs to the polyribonucleotide nucleotidyltransferase family. The cofactor is Mg(2+).

The protein resides in the cytoplasm. The enzyme catalyses RNA(n+1) + phosphate = RNA(n) + a ribonucleoside 5'-diphosphate. In terms of biological role, involved in mRNA degradation. Catalyzes the phosphorolysis of single-stranded polyribonucleotides processively in the 3'- to 5'-direction. The polypeptide is Polyribonucleotide nucleotidyltransferase (Streptococcus thermophilus (strain ATCC BAA-491 / LMD-9)).